The following is a 463-amino-acid chain: Ribosomal protein uS12 methylthiotransferase RimO (463 aa).

An MTTase N-terminal domain is found at 11-126 (PKIGFVSLGC…VMEVVHTHCP (116 aa)). 6 residues coordinate [4Fe-4S] cluster: Cys20, Cys56, Cys85, Cys161, Cys165, and Cys168. The 242-residue stretch at 147–388 (LTPRHYAYLK…MAVAEEVSTA (242 aa)) folds into the Radical SAM core domain. The region spanning 391–463 (QRRVGQTMQV…QGHDLVGVPV (73 aa)) is the TRAM domain.

It belongs to the methylthiotransferase family. RimO subfamily. Requires [4Fe-4S] cluster as cofactor.

The protein resides in the cytoplasm. It catalyses the reaction L-aspartate(89)-[ribosomal protein uS12]-hydrogen + (sulfur carrier)-SH + AH2 + 2 S-adenosyl-L-methionine = 3-methylsulfanyl-L-aspartate(89)-[ribosomal protein uS12]-hydrogen + (sulfur carrier)-H + 5'-deoxyadenosine + L-methionine + A + S-adenosyl-L-homocysteine + 2 H(+). In terms of biological role, catalyzes the methylthiolation of an aspartic acid residue of ribosomal protein uS12. The polypeptide is Ribosomal protein uS12 methylthiotransferase RimO (Acidovorax sp. (strain JS42)).